The primary structure comprises 114 residues: Superoxide dismutase [Cu-Zn] (114 aa).

Cu cation is bound by residues His37, His39, and His54. The interval 48–68 is disordered; it reads CMSSGPHFNPRNKEHGAPTDE. Positions 54, 62, 71, and 74 each coordinate Zn(2+). The segment covering 58 to 68 has biased composition (basic and acidic residues); the sequence is RNKEHGAPTDE. Cu cation is bound at residue His111.

The protein belongs to the Cu-Zn superoxide dismutase family. As to quaternary structure, homodimer. Cu cation serves as cofactor. It depends on Zn(2+) as a cofactor.

The protein resides in the cytoplasm. The enzyme catalyses 2 superoxide + 2 H(+) = H2O2 + O2. Destroys radicals which are normally produced within the cells and which are toxic to biological systems. This Drosophila miranda (Fruit fly) protein is Superoxide dismutase [Cu-Zn].